The primary structure comprises 297 residues: tRNA dimethylallyltransferase (297 aa).

10–17 (GITASGKS) is a binding site for ATP. Residue 12 to 17 (TASGKS) coordinates substrate. Positions 36-39 (DSKQ) are interaction with substrate tRNA.

Belongs to the IPP transferase family. As to quaternary structure, monomer. It depends on Mg(2+) as a cofactor.

The enzyme catalyses adenosine(37) in tRNA + dimethylallyl diphosphate = N(6)-dimethylallyladenosine(37) in tRNA + diphosphate. Its function is as follows. Catalyzes the transfer of a dimethylallyl group onto the adenine at position 37 in tRNAs that read codons beginning with uridine, leading to the formation of N6-(dimethylallyl)adenosine (i(6)A). The sequence is that of tRNA dimethylallyltransferase from Wolbachia sp. subsp. Brugia malayi (strain TRS).